The following is a 267-amino-acid chain: Thymidylate synthase (267 aa).

Arg24 lines the dUMP pocket. His54 contacts (6R)-5,10-methylene-5,6,7,8-tetrahydrofolate. 129-130 is a binding site for dUMP; sequence RR. Cys149 functions as the Nucleophile in the catalytic mechanism. DUMP-binding positions include 169–172, Asn180, and 210–212; these read RSAD and HVY. Asp172 contributes to the (6R)-5,10-methylene-5,6,7,8-tetrahydrofolate binding site. Ala266 contacts (6R)-5,10-methylene-5,6,7,8-tetrahydrofolate.

The protein belongs to the thymidylate synthase family. Bacterial-type ThyA subfamily. Homodimer.

It is found in the cytoplasm. The catalysed reaction is dUMP + (6R)-5,10-methylene-5,6,7,8-tetrahydrofolate = 7,8-dihydrofolate + dTMP. The protein operates within pyrimidine metabolism; dTTP biosynthesis. Its function is as follows. Catalyzes the reductive methylation of 2'-deoxyuridine-5'-monophosphate (dUMP) to 2'-deoxythymidine-5'-monophosphate (dTMP) while utilizing 5,10-methylenetetrahydrofolate (mTHF) as the methyl donor and reductant in the reaction, yielding dihydrofolate (DHF) as a by-product. This enzymatic reaction provides an intracellular de novo source of dTMP, an essential precursor for DNA biosynthesis. The sequence is that of Thymidylate synthase from Paenarthrobacter aurescens (strain TC1).